Here is a 67-residue protein sequence, read N- to C-terminus: ATP synthase F(0) complex subunit 8 (67 aa).

A helical membrane pass occupies residues 8-24; that stretch reads TWFITITSMIMTLFILF. Lys54 bears the N6-acetyllysine; alternate mark. N6-succinyllysine; alternate is present on Lys54. The residue at position 57 (Lys57) is an N6-acetyllysine.

This sequence belongs to the ATPase protein 8 family. Component of the ATP synthase complex composed at least of ATP5F1A/subunit alpha, ATP5F1B/subunit beta, ATP5MC1/subunit c (homooctomer), MT-ATP6/subunit a, MT-ATP8/subunit 8, ATP5ME/subunit e, ATP5MF/subunit f, ATP5MG/subunit g, ATP5MK/subunit k, ATP5MJ/subunit j, ATP5F1C/subunit gamma, ATP5F1D/subunit delta, ATP5F1E/subunit epsilon, ATP5PF/subunit F6, ATP5PB/subunit b, ATP5PD/subunit d, ATP5PO/subunit OSCP. ATP synthase complex consists of a soluble F(1) head domain (subunits alpha(3) and beta(3)) - the catalytic core - and a membrane F(0) domain - the membrane proton channel (subunits c, a, 8, e, f, g, k and j). These two domains are linked by a central stalk (subunits gamma, delta, and epsilon) rotating inside the F1 region and a stationary peripheral stalk (subunits F6, b, d, and OSCP). Interacts with PRICKLE3.

The protein localises to the mitochondrion membrane. Its function is as follows. Subunit 8, of the mitochondrial membrane ATP synthase complex (F(1)F(0) ATP synthase or Complex V) that produces ATP from ADP in the presence of a proton gradient across the membrane which is generated by electron transport complexes of the respiratory chain. ATP synthase complex consist of a soluble F(1) head domain - the catalytic core - and a membrane F(1) domain - the membrane proton channel. These two domains are linked by a central stalk rotating inside the F(1) region and a stationary peripheral stalk. During catalysis, ATP synthesis in the catalytic domain of F(1) is coupled via a rotary mechanism of the central stalk subunits to proton translocation. In vivo, can only synthesize ATP although its ATP hydrolase activity can be activated artificially in vitro. Part of the complex F(0) domain. In Sus scrofa (Pig), this protein is ATP synthase F(0) complex subunit 8.